A 346-amino-acid chain; its full sequence is N-acetyl-gamma-glutamyl-phosphate reductase (346 aa).

The active site involves Cys149.

Belongs to the NAGSA dehydrogenase family. Type 1 subfamily.

The protein resides in the cytoplasm. It catalyses the reaction N-acetyl-L-glutamate 5-semialdehyde + phosphate + NADP(+) = N-acetyl-L-glutamyl 5-phosphate + NADPH + H(+). It participates in amino-acid biosynthesis; L-arginine biosynthesis; N(2)-acetyl-L-ornithine from L-glutamate: step 3/4. Its function is as follows. Catalyzes the NADPH-dependent reduction of N-acetyl-5-glutamyl phosphate to yield N-acetyl-L-glutamate 5-semialdehyde. The chain is N-acetyl-gamma-glutamyl-phosphate reductase from Geobacter sp. (strain M21).